A 154-amino-acid polypeptide reads, in one-letter code: UPF0756 membrane protein BPUM_2558 (154 aa).

Transmembrane regions (helical) follow at residues phenylalanine 8–valine 28, tryptophan 54–phenylalanine 74, tryptophan 87–leucine 107, and leucine 117–isoleucine 137.

This sequence belongs to the UPF0756 family.

The protein resides in the cell membrane. This is UPF0756 membrane protein BPUM_2558 from Bacillus pumilus (strain SAFR-032).